We begin with the raw amino-acid sequence, 2151 residues long: Polycystin-1-like protein 3 (2151 aa).

The signal sequence occupies residues 1-20; that stretch reads MLLQRRSWLWLYIRIGVILG. The Extracellular segment spans residues 25–1073; sequence RKPSIREQHG…IKLLLHVTNN (1049 aa). The C-type lectin domain maps to 34 to 142; the sequence is GGNSCYQLNR…CIEKHHFICQ (109 aa). 2 cysteine pairs are disulfide-bonded: C55–C141 and C116–C133. N89 carries N-linked (GlcNAc...) asparagine glycosylation. Residues 222–245 show a composition bias toward polar residues; sequence SLTGRPQVTSDTLASSSPPQGTSD. Residues 222–609 form a disordered region; it reads SLTGRPQVTS…SSSPPWPVIT (388 aa). The segment covering 246–348 has biased composition (low complexity); that stretch reads TPASSSPPQV…ASSSPPQGTS (103 aa). Polar residues-rich tracts occupy residues 349–363 and 371–600; these read DTPA…TLDT and QGTS…TPAS. Residues N566, N579, N592, N913, and N951 are each glycosylated (N-linked (GlcNAc...) asparagine). Residues 899-1061 enclose the GAIN-B domain; that stretch reads TSLNTSTDHF…FIVPRTVDVE (163 aa). 2 disulfides stabilise this stretch: C1011/C1039 and C1026/C1041. The interval 1011–1061 is GPS; the sequence is CYFWDRYNRTWKSDGCQVGPKSTILKTQCLCDHLTFFSSDFFIVPRTVDVE. The interval 1045 to 1061 is stachel; that stretch reads TFFSSDFFIVPRTVDVE. Residues 1074–1094 traverse the membrane as a helical segment; it reads PVGVSLLSSLLGFYILLAMWA. The Cytoplasmic segment spans residues 1095-1283; that stretch reads SRKDREDMQK…NQFTRVQRLS (189 aa). A PLAT domain is found at 1119 to 1236; sequence SHYLIQVYTG…GNCERDRVFT (118 aa). A helical transmembrane segment spans residues 1284 to 1304; that stretch reads CCMALLLCDMVINIMFWKMGG. The Extracellular portion of the chain corresponds to 1305 to 1320; the sequence is TTAKRGTEQLGPLAVT. The helical transmembrane segment at 1321–1341 threads the bilayer; it reads LSELLVSIQTSIILFPIHLIF. Residues 1342 to 1533 lie on the Cytoplasmic side of the membrane; sequence GRLFQLIHPP…FCLFRWLKCS (192 aa). Residues 1534–1554 traverse the membrane as a helical segment; sequence CWLLLGVISLASAFFITLYSL. Residues 1555-1575 lie on the Extracellular side of the membrane; sequence ELDKDQATSWVISMMLSVLQD. A helical membrane pass occupies residues 1576–1596; that stretch reads IFISQPIKVIFLTLLFSLMAN. Residues 1597-1665 lie on the Cytoplasmic side of the membrane; it reads HMPWLNKDKE…KLTGGTLVQI (69 aa). The chain crosses the membrane as a helical span at residues 1666–1676; that stretch reads LFLTLLMTTVY. The Extracellular portion of the chain corresponds to 1677–1892; the sequence is SAKDSSRFFL…SLTSLQSSER (216 aa). N-linked (GlcNAc) asparagine glycosylation is found at N1712 and N1822. A helical transmembrane segment spans residues 1893–1921; it reads GFAWIVSQVVYYLLVCYYAFIQGCRLKRQ. Over 1922-1930 the chain is Cytoplasmic; that stretch reads RLAFFTRKR. The helical transmembrane segment at 1931 to 1949 threads the bilayer; sequence NLLDTSIVLISFSILGLSM. The Extracellular segment spans residues 1950 to 1980; the sequence is QSLSLLHKKMQQYHCDRDRFISFYEALRVNS. The chain crosses the membrane as a helical span at residues 1981–2002; sequence AVTHLRGFLLLFATVRVWDLLR. Over 2003–2019 the chain is Cytoplasmic; that stretch reads HHAQLQVINKTLSKAWD. A helical transmembrane segment spans residues 2020–2044; sequence EVLGFILIIVVLLSSYAMTFNLLFG. The tract at residues 2043–2081 is channel pore-region; that stretch reads FGWSISDYQSFFRSIVTVVGLLMGTSKHKEVIALYPILG. Over 2045-2077 the chain is Extracellular; that stretch reads WSISDYQSFFRSIVTVVGLLMGTSKHKEVIALY. Residues 2078–2097 form a helical membrane-spanning segment; that stretch reads PILGSLLVLSSIILMGLVII. Topologically, residues 2098–2151 are cytoplasmic; it reads NLFVSAILIAFGKERKACEKEATLTDMLLQKLSSLLGIRLHQNPSEEHADNTGY.

The protein belongs to the polycystin family. In terms of assembly, heterotetramer with PKD2L1, composed of 3 subunit of PKD2L1 and 1 subunit of PKD1L3. Autoproteolytically processed at the GPS region of the GAIN-B domain; this cleavage modulates receptor activity. As to expression, expressed in a subset of taste receptor cells (type III taste cells) distinct from those involved in bitter, sweet and umami taste. Expressed in circumvallate and foliate taste buds, but not in surrounding non-gustatory lingual epithelium cells. Expressed in testis.

The protein resides in the cell membrane. It carries out the reaction Ca(2+)(in) = Ca(2+)(out). The enzyme catalyses Na(+)(in) = Na(+)(out). It catalyses the reaction K(+)(in) = K(+)(out). The catalysed reaction is Mg(2+)(in) = Mg(2+)(out). With respect to regulation, the non-selective cation channel is gated following an off-response property by acid: gated open after the removal of acid stimulus, but not during acid application. Non-selective cation channel activity is inhibited by capsaicin. Regulation of non-selective cation channel activity by external Ca(2+) is bimodal, first sensitizing and subsequently inactivating the current. The apo (closed) heterotetramer has an asymmetric selectivity filter (SF) guarded by Lys-2069 in absence of Ca(2+). However, Ca(2+)-entrance to the SF vestibule is accompanied by a swing motion of Lys-2069 on PKD1L3. Pore-forming subunit of a heterotetrameric, non-selective cation channel that is permeable to Ca(2+). Also shows permeability towards NA(1+), K(+) and Mg(2+). Heterotetrameric complex channel is activated by external low pH and Ca(2+), but opens only when the extracellular pH rises again and after the removal of acid stimulus. May act as a sour taste receptor in gustatory cells; however, its contribution to sour taste perception is unclear in vivo and may be indirect. The sequence is that of Polycystin-1-like protein 3 from Mus musculus (Mouse).